The sequence spans 301 residues: MMRIGLFLLTNLAVLVVAGIILSLFGVGSYHGAGGLNLGNLLVICFVFGMVGSLISLLMSKWMAKKTTGTEIIDPNAPRNQAEAWLLQTVAELSQRAGIQMPEVGIFPSYQSNAFATGWNKNDALVSVSTGLMERMNKDELRAVLAHEIGHVANGDMVTLALIQGVVNAFVMFFARVVGDFIDRNVFGRQDGEAPGMGYFAITIVLDIVFGILASAIVMWFSRHREYRADEAGARLAGKQAMISALLRLQAESEMPDQMPKEMKAFAIAEGKEQGFSLAALFQTHPSIEQRVAALQQLNCP.

Transmembrane regions (helical) follow at residues 4 to 24 (IGLFLLTNLAVLVVAGIILSL) and 38 to 58 (LGNLLVICFVFGMVGSLISLL). Zn(2+) is bound at residue H147. Residue E148 is part of the active site. H151 lines the Zn(2+) pocket. A run of 2 helical transmembrane segments spans residues 155-175 (GDMVTLALIQGVVNAFVMFFA) and 200-220 (FAITIVLDIVFGILASAIVMW). E226 serves as a coordination point for Zn(2+).

The protein belongs to the peptidase M48B family. The cofactor is Zn(2+).

It localises to the cell inner membrane. The chain is Protease HtpX from Acinetobacter baylyi (strain ATCC 33305 / BD413 / ADP1).